Consider the following 315-residue polypeptide: Putative ankyrin repeat protein R600 (315 aa).

ANK repeat units lie at residues 79-108 (NECRYFRMAVYNNSYDIAKYLLENGANVHV), 118-152 (SGFGKFYVFHSEKKEKRDTVELVKLLIDYNAMVGT), 153-182 (DTCNLVHTAIDANRLDVVKILVENGADIFS), 184-211 (QSKLLKSAVMYNYDILEYLISQGIDVTD), and 212-240 (DNNSVLKFAVSRGYDCVDLLLDAGADMNT).

The chain is Putative ankyrin repeat protein R600 from Acanthamoeba polyphaga mimivirus (APMV).